A 2253-amino-acid polypeptide reads, in one-letter code: Polycystin family receptor for egg jelly (2253 aa).

Positions 1 to 19 (MRPGPALLLLGVGLSLSVG) are cleaved as a signal peptide. The Extracellular segment spans residues 20-1184 (RLPLPPVPRG…NIIKSLHQNP (1165 aa)). Residues 154–169 (RPASPAARVSPRSAAP) are compositionally biased toward low complexity. The disordered stretch occupies residues 154–177 (RPASPAARVSPRSAAPGPRPQQGF). N197, N242, N295, N306, N345, N349, N481, N674, N849, N890, N923, N939, N958, and N965 each carry an N-linked (GlcNAc...) asparagine glycan. An REJ domain is found at 215-913 (CVIQRVRINT…STMFCDFTND (699 aa)). A helical transmembrane segment spans residues 1185-1205 (VTLFTVLFIILLYVGLAFWAL). Residues 1206–1389 (YRDEMDQHLR…VAKTFNRLQR (184 aa)) are Cytoplasmic-facing. The PLAT domain maps to 1230-1347 (LCYLVTIFTG…TLDRTFHVTH (118 aa)). The chain crosses the membrane as a helical span at residues 1390-1410 (LSCCLAMLLSSLLCNIMFFNL). Topologically, residues 1411–1427 (NRQEQTESRERKYMRSM) are extracellular. A helical transmembrane segment spans residues 1428-1448 (MIGIESVLITIPVQLLITFLF). Residues 1449–1576 (TCSQRKPQAD…KPRIVLPWWC (128 aa)) are Cytoplasmic-facing. Residues 1494–1562 (PREVAKPASK…EQHPSQKDLQ (69 aa)) are disordered. Positions 1517–1527 (SKPKHRHRKAQ) are enriched in basic residues. Positions 1549-1558 (DVHSEQHPSQ) are enriched in basic and acidic residues. Residues 1577–1597 (VYVAWFLVFATSSISSFFIVF) traverse the membrane as a helical segment. Topologically, residues 1598–1607 (YGLTYGYDKS) are extracellular. Residues 1608 to 1628 (IEWLFASFCSFCQSVLLVQPS) traverse the membrane as a helical segment. Residues 1629–1708 (KIILLSGFRT…RKKRIKRRAL (80 aa)) are Cytoplasmic-facing. A helical transmembrane segment spans residues 1709–1729 (LFLSYILTHFIFLALLLILIV). Residues 1730–1966 (LLRHTDCFYY…FDRKASAEIY (237 aa)) lie on the Extracellular side of the membrane. N1836, N1893, and N1944 each carry an N-linked (GlcNAc...) asparagine glycan. The helical transmembrane segment at 1967–1987 (LYVAILIFFLAYVVDEGCIIM) threads the bilayer. The Cytoplasmic segment spans residues 1988–1996 (QERASYVRS). A helical membrane pass occupies residues 1997-2017 (VYNLLNFALKCIFTVLIVLFL). The Extracellular portion of the chain corresponds to 2018 to 2042 (RKHFLATGIIRFYLSNPEDFIPFHA). Residues 2043-2063 (VSQVDHIMRIILGFLLFLTIL) traverse the membrane as a helical segment. Residues 2064 to 2091 (KTLRYSRFFYDVRLAQRAIQAALPGICH) lie on the Cytoplasmic side of the membrane. A helical membrane pass occupies residues 2092-2112 (MAFVVSVYFFVYMAFGYLVFG). At 2113-2145 (QHEWNYSNLIHSTQTVFSYCVSAFQNTEFSNNR) the chain is on the extracellular side. A helical membrane pass occupies residues 2146–2166 (ILGVLFLSSFMLVMICVLINL). Residues 2167–2253 (FQAVILSAYE…NGKKMVYLVV (87 aa)) are Cytoplasmic-facing.

The protein belongs to the polycystin family. Exclusively expressed in testis.

The protein localises to the cell membrane. It is found in the cytoplasmic vesicle. The protein resides in the secretory vesicle. It localises to the acrosome membrane. Its subcellular location is the nucleus. Testis-specific protein that controls sperm transport and the timing of zona pellucida-evoked exocytosis of the sperm acrosome. The protein is Polycystin family receptor for egg jelly of Homo sapiens (Human).